The sequence spans 413 residues: cAMP-dependent protein kinase regulatory subunit (413 aa).

The segment at 1-145 is disordered; the sequence is MADSSSFPGT…DSWTPPCHPK (145 aa). The tract at residues 24–161 is dimerization and phosphorylation; it reads SPIQKISEEE…RLKTAVSNNF (138 aa). Over residues 58 to 67 the composition is skewed to low complexity; that stretch reads GNSFNGDNGS. Over residues 121-138 the composition is skewed to polar residues; sequence TSVSAESLNPTSAGSDSW. At S122 the chain carries Phosphoserine. 3',5'-cyclic AMP is bound by residues 162–291, E240, R249, 294–413, E361, and R370; these read LFSH…FLEE and LLSS…PSPS.

It belongs to the cAMP-dependent kinase regulatory chain family. Tetramer, composed of 2 regulatory (R) and 2 catalytic (C) subunits. In the presence of cAMP it dissociates into 2 active monomeric C subunits and an R dimer.

The protein is cAMP-dependent protein kinase regulatory subunit (pkaR) of Aspergillus fumigatus (strain ATCC MYA-4609 / CBS 101355 / FGSC A1100 / Af293) (Neosartorya fumigata).